The following is a 206-amino-acid chain: Large ribosomal subunit protein uL4 (206 aa).

The protein belongs to the universal ribosomal protein uL4 family. As to quaternary structure, part of the 50S ribosomal subunit.

Its function is as follows. One of the primary rRNA binding proteins, this protein initially binds near the 5'-end of the 23S rRNA. It is important during the early stages of 50S assembly. It makes multiple contacts with different domains of the 23S rRNA in the assembled 50S subunit and ribosome. Functionally, forms part of the polypeptide exit tunnel. This Afipia carboxidovorans (strain ATCC 49405 / DSM 1227 / KCTC 32145 / OM5) (Oligotropha carboxidovorans) protein is Large ribosomal subunit protein uL4.